We begin with the raw amino-acid sequence, 870 residues long: Valine--tRNA ligase (870 aa).

The short motif at 42-52 (PNVTGVLHIGH) is the 'HIGH' region element. Residues 527-531 (KMSKS) carry the 'KMSKS' region motif. Lys530 serves as a coordination point for ATP. Residues 800–870 (LENVDLSGIL…ISVELQNLRG (71 aa)) adopt a coiled-coil conformation.

Belongs to the class-I aminoacyl-tRNA synthetase family. ValS type 1 subfamily. As to quaternary structure, monomer.

It is found in the cytoplasm. It catalyses the reaction tRNA(Val) + L-valine + ATP = L-valyl-tRNA(Val) + AMP + diphosphate. Catalyzes the attachment of valine to tRNA(Val). As ValRS can inadvertently accommodate and process structurally similar amino acids such as threonine, to avoid such errors, it has a 'posttransfer' editing activity that hydrolyzes mischarged Thr-tRNA(Val) in a tRNA-dependent manner. The sequence is that of Valine--tRNA ligase from Campylobacter jejuni subsp. jejuni serotype O:2 (strain ATCC 700819 / NCTC 11168).